The primary structure comprises 101 residues: Small ribosomal subunit protein bS18c (101 aa).

The span at 1–19 (MNKSKRPFTKSKRSFRRRL) shows a compositional bias: basic residues. A disordered region spans residues 1-23 (MNKSKRPFTKSKRSFRRRLPPIQ).

It belongs to the bacterial ribosomal protein bS18 family. In terms of assembly, part of the 30S ribosomal subunit.

Its subcellular location is the plastid. It localises to the chloroplast. This Lobularia maritima (Sweet alyssum) protein is Small ribosomal subunit protein bS18c.